Here is a 312-residue protein sequence, read N- to C-terminus: MANIVFKLSDKDITTLMSRISFDTENLPQGMKARAKYQNTTVNIYQSGKVMFQGNHAEAVSEELLPQHSQLNTNKTKKKNMANSFLEQTLMYDQFNCIGSDEAGSGDYFGPLTVCAAFVTKEHVPILKTLGVDDSKKLTDTKIVELAEQLVTFIPHSLLTLHNEKYNIQQAKGWTQVKMKAALHNEAIKNVLEKIDSSQLDYIVIDQFAKREVYSHYALSDIPLPKKTKFETKGESKSLAIAVASIISRYAFVTYMDQISKNINMTIPKGAGAKVDVIAAKIIKKYGLSRLDTISKKHFKNREKAQKILKPL.

One can recognise an RNase H type-2 domain in the interval 95-311; that stretch reads FNCIGSDEAG…REKAQKILKP (217 aa). Residues aspartate 101, glutamate 102, and aspartate 206 each coordinate a divalent metal cation.

The protein belongs to the RNase HII family. RnhC subfamily. The cofactor is Mn(2+). Mg(2+) is required as a cofactor.

It is found in the cytoplasm. The enzyme catalyses Endonucleolytic cleavage to 5'-phosphomonoester.. Endonuclease that specifically degrades the RNA of RNA-DNA hybrids. This chain is Ribonuclease HIII, found in Staphylococcus aureus (strain USA300).